The sequence spans 1108 residues: DNA-directed RNA polymerase subunit beta (1108 aa).

The protein belongs to the RNA polymerase beta chain family. In plastids the minimal PEP RNA polymerase catalytic core is composed of four subunits: alpha, beta, beta', and beta''. When a (nuclear-encoded) sigma factor is associated with the core the holoenzyme is formed, which can initiate transcription.

The protein resides in the plastid. Its subcellular location is the chloroplast. The enzyme catalyses RNA(n) + a ribonucleoside 5'-triphosphate = RNA(n+1) + diphosphate. In terms of biological role, DNA-dependent RNA polymerase catalyzes the transcription of DNA into RNA using the four ribonucleoside triphosphates as substrates. The protein is DNA-directed RNA polymerase subunit beta of Gnetum parvifolium (Small-leaved jointfir).